The following is a 145-amino-acid chain: Pseudoazurin (145 aa).

A signal peptide spans 1–22 (MFHHSLAAAAAALLALAAPGFA). The Plastocyanin-like domain maps to 27–115 (VHMLNKGESG…MGMVGLVQVG (89 aa)). 4 residues coordinate Cu cation: His62, Cys100, His103, and Met108. The segment at 126 to 145 (TAKMPKKARERMDAELAQVN) is disordered.

As to quaternary structure, homodimer. Cu cation serves as cofactor.

It localises to the periplasm. Its function is as follows. This soluble electron transfer copper protein is required for the inactivation of copper-containing nitrite reductase in the presence of oxygen. The protein is Pseudoazurin (pazS) of Paracoccus pantotrophus (Thiosphaera pantotropha).